The following is a 61-amino-acid chain: Small ribosomal subunit protein uS14 (61 aa).

Positions 24, 27, 40, and 43 each coordinate Zn(2+).

The protein belongs to the universal ribosomal protein uS14 family. Zinc-binding uS14 subfamily. As to quaternary structure, part of the 30S ribosomal subunit. Contacts proteins S3 and S10. Zn(2+) is required as a cofactor.

Its function is as follows. Binds 16S rRNA, required for the assembly of 30S particles and may also be responsible for determining the conformation of the 16S rRNA at the A site. This Helicobacter pylori (strain G27) protein is Small ribosomal subunit protein uS14.